Here is a 127-residue protein sequence, read N- to C-terminus: Mating pheromone 4 (127 aa).

A signal peptide spans 1 to 16 (MKAIFIILAILMVTQA). A propeptide spanning residues 17 to 42 (FKMTSKVKSMNMSRNMSKNTSTLGTK) is cleaved from the precursor.

Its subcellular location is the secreted. Functionally, mating ciliate pheromones (or gamones) are diffusible extracellular communication signals that distinguish different intraspecific classes of cells commonly referred to as 'mating types'. They prepare the latter for conjugation by changing their cell surface properties. In Euplotoides octocarinatus (Freshwater ciliate), this protein is Mating pheromone 4 (PHR4).